Here is a 206-residue protein sequence, read N- to C-terminus: 2,3-bisphosphoglycerate-dependent phosphoglycerate mutase (206 aa).

Substrate contacts are provided by residues 9-16 (RHGQSEWN), 22-23 (TG), Arg-61, 88-91 (ERDY), Lys-99, 115-116 (RR), and 159-160 (GN). His-10 functions as the Tele-phosphohistidine intermediate in the catalytic mechanism. Residue Glu-88 is the Proton donor/acceptor of the active site.

This sequence belongs to the phosphoglycerate mutase family. BPG-dependent PGAM subfamily. As to quaternary structure, homodimer.

It catalyses the reaction (2R)-2-phosphoglycerate = (2R)-3-phosphoglycerate. It participates in carbohydrate degradation; glycolysis; pyruvate from D-glyceraldehyde 3-phosphate: step 3/5. Catalyzes the interconversion of 2-phosphoglycerate and 3-phosphoglycerate. This is 2,3-bisphosphoglycerate-dependent phosphoglycerate mutase from Brucella melitensis biotype 2 (strain ATCC 23457).